The chain runs to 636 residues: Iron transport multicopper oxidase FET3 (636 aa).

The first 21 residues, 1–21 (MTNALLSIAVLLFSMLSLAQA), serve as a signal peptide directing secretion. Over 22 to 559 (ETHTFNWTTG…AFIPTGFTKK (538 aa)) the chain is Extracellular. 3 N-linked (GlcNAc...) asparagine glycosylation sites follow: asparagine 27, asparagine 74, and asparagine 77. 2 consecutive Plastocyanin-like domains span residues 32 to 146 (WDYR…IKDD) and 157 to 301 (SLSL…VYNK). Cu cation-binding residues include histidine 81 and histidine 83. N-linked (GlcNAc...) asparagine glycans are attached at residues asparagine 88 and asparagine 113. Cu cation-binding residues include histidine 126 and histidine 128. N-linked (GlcNAc...) asparagine glycans are attached at residues asparagine 194, asparagine 198, asparagine 244, asparagine 265, asparagine 292, asparagine 300, asparagine 359, and asparagine 381. A Plastocyanin-like 3 domain is found at 362 to 502 (YTAPKVPTLM…GLGLVLVEDP (141 aa)). Cu cation is bound by residues histidine 413, histidine 416, histidine 418, histidine 483, cysteine 484, histidine 485, and histidine 489. The chain crosses the membrane as a helical span at residues 560–584 (GIIAMTFSCFAGILGIITIAIYGMM). Residues 585–636 (DMEDATEKVIRDLHVDPEVLLNEVDENEERQVNEDRHSTEKHQFLTKAKRFF) lie on the Cytoplasmic side of the membrane.

The protein belongs to the multicopper oxidase family. Cu cation is required as a cofactor.

The protein resides in the cell membrane. The enzyme catalyses 4 Fe(2+) + O2 + 4 H(+) = 4 Fe(3+) + 2 H2O. It carries out the reaction 4 Cu(+) + O2 + 4 H(+) = 4 Cu(2+) + 2 H2O. Its function is as follows. Iron transport multicopper ferroxidase required for Fe(2+) ion high affinity uptake. Required to oxidize Fe(2+) to Fe(3+), which is then transported into the cell via the ferric iron permease FTR1. Essential component of copper-dependent iron transport. Also has cuprous oxidase activity. The polypeptide is Iron transport multicopper oxidase FET3 (FET3) (Saccharomyces cerevisiae (strain ATCC 204508 / S288c) (Baker's yeast)).